Here is a 346-residue protein sequence, read N- to C-terminus: Annexin A1 (346 aa).

An N-acetylalanine modification is found at alanine 2. Serine 5 is subject to Phosphoserine; by TRPM7. An Isoglutamyl lysine isopeptide (Gln-Lys) (interchain with K-?) cross-link involves residue glutamine 19. Tyrosine 21 is modified (phosphotyrosine; by EGFR). The disordered stretch occupies residues valine 25 to aspartate 47. 2 positions are modified to phosphoserine: serine 34 and serine 37. Phosphothreonine is present on threonine 41. Annexin repeat units follow at residues phenylalanine 42–lysine 113, threonine 114–lysine 185, aspartate 197–lysine 269, and serine 273–glycine 344. Lysine 58 bears the N6-acetyllysine mark. Ca(2+)-binding residues include glycine 59, valine 60, glutamate 62, lysine 97, leucine 100, glutamate 105, methionine 127, glycine 129, glycine 131, threonine 132, and glutamate 134. Threonine 136 is subject to Phosphothreonine. Positions 171, 210, and 213 each coordinate Ca(2+). A Glycyl lysine isopeptide (Lys-Gly) (interchain with G-Cter in SUMO1); alternate cross-link involves residue lysine 214. A Glycyl lysine isopeptide (Lys-Gly) (interchain with G-Cter in SUMO2); alternate cross-link involves residue lysine 214. Glycine 215 contributes to the Ca(2+) binding site. Lysine 239 is modified (N6-acetyllysine). Ca(2+) contacts are provided by aspartate 253, glutamate 255, and leucine 256. Residue lysine 257 forms a Glycyl lysine isopeptide (Lys-Gly) (interchain with G-Cter in SUMO1) linkage. Glutamate 261, methionine 286, glycine 288, and glycine 290 together coordinate Ca(2+). Position 312 is an N6-acetyllysine (lysine 312). A disulfide bridge links cysteine 324 with cysteine 343. Ca(2+) contacts are provided by leucine 328, glutamate 330, and threonine 331. Lysine 332 is covalently cross-linked (Glycyl lysine isopeptide (Lys-Gly) (interchain with G-Cter in SUMO1)). Glutamate 336 is a Ca(2+) binding site.

The protein belongs to the annexin family. In terms of assembly, homodimer; non-covalently linked. Homodimer; linked by transglutamylation. Homodimers linked by transglutamylation are observed in placenta, but not in other tissues. Interacts with S100A11. Heterotetramer, formed by two molecules each of S100A11 and ANXA1. Interacts with DYSF. Interacts with EGFR. In terms of processing, phosphorylated by EGFR. Phosphorylated by protein kinase C and TRPM7. Phosphorylated in response to EGF treatment. Sumoylated. Post-translationally, proteolytically cleaved by cathepsin CTSG to release the active N-terminal peptide Ac2-26. In terms of tissue distribution, detected in lung and spleen (at protein level).

The protein localises to the nucleus. It is found in the cytoplasm. It localises to the cell projection. Its subcellular location is the cilium. The protein resides in the basolateral cell membrane. The protein localises to the lateral cell membrane. It is found in the early endosome. It localises to the cell membrane. Its subcellular location is the cytoplasmic vesicle membrane. The protein resides in the apical cell membrane. The protein localises to the membrane. It is found in the endosome. It localises to the secreted. Its subcellular location is the extracellular space. The protein resides in the extracellular exosome. The protein localises to the cytoplasmic vesicle. It is found in the secretory vesicle lumen. It localises to the phagocytic cup. In terms of biological role, plays important roles in the innate immune response as effector of glucocorticoid-mediated responses and regulator of the inflammatory process. Has anti-inflammatory activity. Plays a role in glucocorticoid-mediated down-regulation of the early phase of the inflammatory response. Contributes to the adaptive immune response by enhancing signaling cascades that are triggered by T-cell activation, regulates differentiation and proliferation of activated T-cells. Promotes the differentiation of T-cells into Th1 cells and negatively regulates differentiation into Th2 cells. Has no effect on unstimulated T-cells. Negatively regulates hormone exocytosis via activation of the formyl peptide receptors and reorganization of the actin cytoskeleton. Has high affinity for Ca(2+) and can bind up to eight Ca(2+) ions. Displays Ca(2+)-dependent binding to phospholipid membranes. Plays a role in the formation of phagocytic cups and phagosomes. Plays a role in phagocytosis by mediating the Ca(2+)-dependent interaction between phagosomes and the actin cytoskeleton. Functionally, functions at least in part by activating the formyl peptide receptors and downstream signaling cascades. Promotes chemotaxis of granulocytes and monocytes via activation of the formyl peptide receptors. Promotes rearrangement of the actin cytoskeleton, cell polarization and cell migration. Promotes resolution of inflammation and wound healing. Acts via neutrophil N-formyl peptide receptors to enhance the release of CXCL2. This is Annexin A1 (ANXA1) from Sus scrofa (Pig).